The chain runs to 168 residues: Endoribonuclease YbeY (168 aa).

3 residues coordinate Zn(2+): His-126, His-130, and His-136.

This sequence belongs to the endoribonuclease YbeY family. Zn(2+) serves as cofactor.

The protein localises to the cytoplasm. Single strand-specific metallo-endoribonuclease involved in late-stage 70S ribosome quality control and in maturation of the 3' terminus of the 16S rRNA. This is Endoribonuclease YbeY from Sinorhizobium medicae (strain WSM419) (Ensifer medicae).